A 356-amino-acid polypeptide reads, in one-letter code: Protein pelota homolog (356 aa).

It belongs to the eukaryotic release factor 1 family. Pelota subfamily. As to quaternary structure, monomer. It depends on a divalent metal cation as a cofactor.

The protein resides in the cytoplasm. May function in recognizing stalled ribosomes, interact with stem-loop structures in stalled mRNA molecules, and effect endonucleolytic cleavage of the mRNA. May play a role in the release non-functional ribosomes and degradation of damaged mRNAs. Has endoribonuclease activity. The chain is Protein pelota homolog from Pyrococcus horikoshii (strain ATCC 700860 / DSM 12428 / JCM 9974 / NBRC 100139 / OT-3).